Reading from the N-terminus, the 317-residue chain is Ribosome production factor 2 homolog (317 aa).

Residues 28–240 enclose the Brix domain; the sequence is KTAIFLRGNA…IRRVQPAESD (213 aa). The tract at residues 287–317 is disordered; that stretch reads MKGLKRSVEEREDSENEEVEIEEDVISDASE. Residues Ser293, Ser300, Ser313, and Ser316 each carry the phosphoserine modification. Residues 296–317 are compositionally biased toward acidic residues; that stretch reads EREDSENEEVEIEEDVISDASE.

It belongs to the RPF2 family. As to quaternary structure, component of a hexameric 5S RNP precursor complex, composed of 5S RNA, rrs1, rpf2, rpl5a/rpl5b, rpl11a/rpl11b and syo1; this complex acts as a precursor for ribosome assembly.

The protein resides in the nucleus. It is found in the nucleolus. The chain is Ribosome production factor 2 homolog from Schizosaccharomyces pombe (strain 972 / ATCC 24843) (Fission yeast).